Consider the following 294-residue polypeptide: 4-hydroxy-tetrahydrodipicolinate synthase (294 aa).

Thr-47 serves as a coordination point for pyruvate. Catalysis depends on Tyr-135, which acts as the Proton donor/acceptor. The Schiff-base intermediate with substrate role is filled by Lys-163. A pyruvate-binding site is contributed by Thr-205.

The protein belongs to the DapA family. As to quaternary structure, homotetramer; dimer of dimers.

The protein localises to the cytoplasm. It carries out the reaction L-aspartate 4-semialdehyde + pyruvate = (2S,4S)-4-hydroxy-2,3,4,5-tetrahydrodipicolinate + H2O + H(+). It participates in amino-acid biosynthesis; L-lysine biosynthesis via DAP pathway; (S)-tetrahydrodipicolinate from L-aspartate: step 3/4. Catalyzes the condensation of (S)-aspartate-beta-semialdehyde [(S)-ASA] and pyruvate to 4-hydroxy-tetrahydrodipicolinate (HTPA). The chain is 4-hydroxy-tetrahydrodipicolinate synthase from Rickettsia conorii (strain ATCC VR-613 / Malish 7).